Here is a 493-residue protein sequence, read N- to C-terminus: Glutamate--tRNA ligase (493 aa).

A 'HIGH' region motif is present at residues P10–S20. Residues C114, C116, C141, and E143 each coordinate Zn(2+). Residues K258–R262 carry the 'KMSKS' region motif. K261 contributes to the ATP binding site.

It belongs to the class-I aminoacyl-tRNA synthetase family. Glutamate--tRNA ligase type 1 subfamily. As to quaternary structure, monomer. Zn(2+) serves as cofactor.

It is found in the cytoplasm. The enzyme catalyses tRNA(Glu) + L-glutamate + ATP = L-glutamyl-tRNA(Glu) + AMP + diphosphate. In terms of biological role, catalyzes the attachment of glutamate to tRNA(Glu) in a two-step reaction: glutamate is first activated by ATP to form Glu-AMP and then transferred to the acceptor end of tRNA(Glu). The sequence is that of Glutamate--tRNA ligase from Alkaliphilus metalliredigens (strain QYMF).